A 215-amino-acid polypeptide reads, in one-letter code: Ras-related protein Rab-5A (215 aa).

The GTP site is built by Ser29, Ala30, Gly32, Lys33, Ser34, Ser35, His46, Glu47, Thr52, and Gly78. A Mg(2+)-binding site is contributed by Ser34. 2 short sequence motifs (switch) span residues 44–56 (QFHE…IGAA) and 77–93 (AGQE…YRGA). Residue Thr52 coordinates Mg(2+). Ser84 is modified (phosphoserine). The GTP site is built by Asn133, Lys134, Asp136, Ala164, and Lys165. Positions 185–215 (EPQNPGINCTRGRGVDLTEPTQPTRSQCCSN) are disordered. The span at 203-215 (EPTQPTRSQCCSN) shows a compositional bias: polar residues. Residues Cys212 and Cys213 are each lipidated (S-geranylgeranyl cysteine).

This sequence belongs to the small GTPase superfamily. Rab family. Interacts with GDI1; this promotes dissociation from membranes; phosphorylation at Ser-84 disrupts this interaction. Interacts with GDI2; phosphorylation at Ser-84 disrupts the interaction. Interacts with SGSM1 and SGSM3. Interacts with PIK3CB. Interacts with RIN1 and GAPVD1, which regulate its pathway, probably by acting as a GEF. Interacts with RINL. Interacts with ALS2CL, SUN2, ZFYVE20 and RUFY1. Interacts with RABEP1; one RABEP1 homodimer binds two RAB5A chains, but at opposite sides of the dimer. Interacts with OCRL and INPP5F. May be a component of a complex composed of RAB5A, DYN2 and PIK3C3. Does not interact with the BLOC-3 complex (heterodimer of HPS1 and HPS4). Interacts with CLN5. Interacts with APPL2. Interacts with F8A1/F8A2/F8A3. Found in a complex with F8A1/F8A2/F8A3, HTT and RAB5A; mediates the recruitment of HTT by RAB5A onto early endosomes. Interacts with ATP9A. Interacts with PPP1R21; mediates the recruitment of FERRY complex by RAB5A onto early endosomes. Requires Mg(2+) as cofactor. In terms of processing, phosphorylation of Ser-84 in the switch II region by LRRK2 prevents the association of RAB regulatory proteins, including RAB GDP dissociation inhibitors GDI1 and GDI2.

Its subcellular location is the cell membrane. The protein localises to the early endosome membrane. The protein resides in the melanosome. It localises to the cytoplasmic vesicle. It is found in the cell projection. Its subcellular location is the ruffle. The protein localises to the membrane. The protein resides in the cytoplasm. It localises to the cytosol. It is found in the phagosome membrane. Its subcellular location is the endosome membrane. It carries out the reaction GTP + H2O = GDP + phosphate + H(+). Its activity is regulated as follows. Regulated by guanine nucleotide exchange factors (GEFs) including RINL, which promote the exchange of bound GDP for free GTP. Regulated by GTPase activating proteins (GAPs) which increase the GTP hydrolysis activity. Inhibited by GDP dissociation inhibitors (GDIs). The small GTPases Rab are key regulators of intracellular membrane trafficking, from the formation of transport vesicles to their fusion with membranes. Rabs cycle between an inactive GDP-bound form and an active GTP-bound form that is able to recruit to membranes different sets of downstream effectors directly responsible for vesicle formation, movement, tethering and fusion. RAB5A is required for the fusion of plasma membranes and early endosomes. Contributes to the regulation of filopodia extension. Required for the exosomal release of SDCBP, CD63, PDCD6IP and syndecan. Regulates maturation of apoptotic cell-containing phagosomes, probably downstream of DYN2 and PIK3C3. The polypeptide is Ras-related protein Rab-5A (RAB5A) (Sus scrofa (Pig)).